Consider the following 89-residue polypeptide: Small ribosomal subunit protein uS14A (89 aa).

It belongs to the universal ribosomal protein uS14 family. As to quaternary structure, part of the 30S ribosomal subunit. Contacts proteins S3 and S10.

In terms of biological role, binds 16S rRNA, required for the assembly of 30S particles and may also be responsible for determining the conformation of the 16S rRNA at the A site. This chain is Small ribosomal subunit protein uS14A, found in Lactiplantibacillus plantarum (strain ATCC BAA-793 / NCIMB 8826 / WCFS1) (Lactobacillus plantarum).